A 91-amino-acid polypeptide reads, in one-letter code: uncharacterized protein (91 aa).

Residues 1–18 form the signal peptide; the sequence is MKVNLILFSLFLLVSIMA. C19 carries N-palmitoyl cysteine lipidation. Residue C19 is the site of S-diacylglycerol cysteine attachment.

The protein resides in the cell membrane. This is an uncharacterized protein from Escherichia coli (strain K12).